A 326-amino-acid polypeptide reads, in one-letter code: Phospholipid scramblase 4 (326 aa).

The segment at 1-32 (MSGLVPTAPEQPTEEMENQIKSPTAVPDAPPD) is disordered. Residues 1 to 94 (MSGLVPTAPE…PVTNQPAPIM (94 aa)) form a proline-rich domain (PRD) region. Over 1–299 (MSGLVPTAPE…IRFPLALDVK (299 aa)) the chain is Cytoplasmic. The SH3-binding 1 motif lies at 18 to 25 (NQIKSPTA). The PPxY motif motif lies at 30–33 (PPDY). The SH3-binding 2 signature appears at 41–49 (PAGPVASPS). 2 positions are modified to phosphotyrosine; by ABL: Tyr-79 and Tyr-84. Residues 94-102 (MWMAGPAPV) carry the SH3-binding 3 motif. 5 S-palmitoyl cysteine lipidation sites follow: Cys-193, Cys-194, Cys-195, Cys-197, and Cys-198. A helical membrane pass occupies residues 300–316 (MKAMIFGSCFLIDFMYF). The Extracellular segment spans residues 317–326 (ERPPPRRMSR).

Belongs to the phospholipid scramblase family. As to quaternary structure, interacts with PDCD6. Interacts with KPNA2; this interaction mediates the nucleus import of PLSCR4. It depends on Ca(2+) as a cofactor. Requires Mg(2+) as cofactor. The cofactor is Zn(2+).

It localises to the cell membrane. Its subcellular location is the nucleus. The catalysed reaction is a 1,2-diacyl-sn-glycero-3-phosphocholine(in) = a 1,2-diacyl-sn-glycero-3-phosphocholine(out). It catalyses the reaction a 1,2-diacyl-sn-glycero-3-phospho-L-serine(in) = a 1,2-diacyl-sn-glycero-3-phospho-L-serine(out). Its function is as follows. Catalyzes metal ion-induced ATP-independent rapid bidirectional and non-specific movement of phospholipids (lipid scrambling or lipid flip-flop) between the inner and outer leaflet of the plasma membrane and participates in the redistribution of phospholipids between membrane leaflets. Metal ions bind to the calcium-binding site and induce conformation change in the protein. Has a greater affi nity for Ca(2+) than Mg(2+) and Zn(2+). In Mus musculus (Mouse), this protein is Phospholipid scramblase 4.